A 289-amino-acid chain; its full sequence is RNA-binding protein CP31B, chloroplastic (289 aa).

Residues 1–71 (MTSSVLTPSL…NSSPVVTFVS (71 aa)) constitute a chloroplast transit peptide. RRM domains follow at residues 113-191 (AKLF…RAAP) and 207-285 (FRIY…VAEE).

ADP-ribosylated by the Pseudomonas syringae type III effector HopU1. ADP-ribosylation reduces the ability of the protein to bind RNA.

It localises to the plastid. The protein localises to the chloroplast. Functionally, required for specific RNA editing events in chloroplasts and stabilizes specific chloroplast mRNAs. The polypeptide is RNA-binding protein CP31B, chloroplastic (Arabidopsis thaliana (Mouse-ear cress)).